A 288-amino-acid chain; its full sequence is MKQIKKAIIPAAGLGTRFLPATKAMPKEMLPILDKPTIQYIVEEASRAGIEDIIIVTGKHKRAIEDHFDNQKELEMVLEEKGKDDLLEKVQYSTDLANIFYVRQKEQKGLGHAIHTARQFIGNEPFAVLLGDDIVESETPAIKQLMNVYEETGHSVIGVQEVPESVTHRYGIIDPLEKEGRRYEVKQFVEKPKQGTAPSNLAIMGRYILTPEIFDYLETQKEGAGNEIQLTDAIERMNSDIPVYAYDFDGDRYDVGEKLGFVKTTIEYALKDPKMKDELIKFIKELGF.

This sequence belongs to the UDPGP type 2 family.

The enzyme catalyses alpha-D-glucose 1-phosphate + UTP + H(+) = UDP-alpha-D-glucose + diphosphate. It functions in the pathway glycolipid metabolism; diglucosyl-diacylglycerol biosynthesis. Functionally, catalyzes the formation of UDP-glucose from glucose-1-phosphate and UTP. This is an intermediate step in the biosynthesis of diglucosyl-diacylglycerol (Glc2-DAG), i.e. a glycolipid found in the membrane, which is also used as a membrane anchor for lipoteichoic acid (LTA). The protein is UTP--glucose-1-phosphate uridylyltransferase (gtaB) of Staphylococcus haemolyticus (strain JCSC1435).